The following is a 232-amino-acid chain: uncharacterized protein (232 aa).

Residues 89–140 are a coiled coil; that stretch reads EFGTWQRRKNSLEDSLREVMKRRGELQDQLTAELGAIERMQTDLVGARQTLD.

This is an uncharacterized protein from Mycobacterium leprae (strain TN).